We begin with the raw amino-acid sequence, 604 residues long: Sulfite reductase [NADPH] flavoprotein alpha-component (604 aa).

One can recognise a Flavodoxin-like domain in the interval 66-204 (VTVLSASQTG…AADGWTDNIA (139 aa)). Residues 72–77 (SQTGNA), 119–122 (STQG), and 155–164 (LGDSSYPNFC) contribute to the FMN site. The FAD-binding FR-type domain maps to 239-453 (ADPFPAALLA…VERNDGFRLP (215 aa)). FAD contacts are provided by residues Thr327, Gln361, 391 to 394 (RLYS), 409 to 411 (TVG), and 424 to 427 (GGAS). Residues 524-525 (SR), 530-534 (KIYVQ), and Asp566 contribute to the NADP(+) site. Tyr604 contributes to the FAD binding site.

Belongs to the NADPH-dependent sulphite reductase flavoprotein subunit CysJ family. It in the N-terminal section; belongs to the flavodoxin family. This sequence in the C-terminal section; belongs to the flavoprotein pyridine nucleotide cytochrome reductase family. Alpha(8)-beta(8). The alpha component is a flavoprotein, the beta component is a hemoprotein. It depends on FAD as a cofactor. FMN is required as a cofactor.

It catalyses the reaction hydrogen sulfide + 3 NADP(+) + 3 H2O = sulfite + 3 NADPH + 4 H(+). Its pathway is sulfur metabolism; hydrogen sulfide biosynthesis; hydrogen sulfide from sulfite (NADPH route): step 1/1. Its function is as follows. Component of the sulfite reductase complex that catalyzes the 6-electron reduction of sulfite to sulfide. This is one of several activities required for the biosynthesis of L-cysteine from sulfate. The flavoprotein component catalyzes the electron flow from NADPH -&gt; FAD -&gt; FMN to the hemoprotein component. In Neisseria meningitidis serogroup A / serotype 4A (strain DSM 15465 / Z2491), this protein is Sulfite reductase [NADPH] flavoprotein alpha-component.